A 517-amino-acid chain; its full sequence is Crotonobetaine/carnitine--CoA ligase (517 aa).

It belongs to the ATP-dependent AMP-binding enzyme family.

It carries out the reaction 4-(trimethylamino)butanoate + ATP + CoA = 4-(trimethylamino)butanoyl-CoA + AMP + diphosphate. It catalyses the reaction crotonobetaine + ATP + CoA = crotonobetainyl-CoA + AMP + diphosphate. The enzyme catalyses (R)-carnitine + ATP + CoA = (R)-carnitinyl-CoA + AMP + diphosphate. Its pathway is amine and polyamine metabolism; carnitine metabolism. Its function is as follows. Catalyzes the transfer of CoA to carnitine, generating the initial carnitinyl-CoA needed for the CaiB reaction cycle. Also has activity toward crotonobetaine and gamma-butyrobetaine. This is Crotonobetaine/carnitine--CoA ligase from Escherichia coli O45:K1 (strain S88 / ExPEC).